We begin with the raw amino-acid sequence, 315 residues long: Voltage-dependent calcium channel gamma-3 subunit (315 aa).

4 helical membrane-spanning segments follow: residues 8-28, 104-124, 135-155, and 181-201; these read IQMLITTVGAFAAFSLMTIAV, SSVFPILSVTLLFFGGLCVAA, ILSAGIFFVSAGLSNIIGIIV, and FGAFSFIIAEIVGVVAVHIYI. Ser248 bears the Phosphoserine mark.

The protein belongs to the PMP-22/EMP/MP20 family. CACNG subfamily. As to quaternary structure, the L-type calcium channel is composed of five subunits: alpha-1, alpha-2/delta, beta and gamma. Acts as an auxiliary subunit for AMPA-selective glutamate receptors (AMPARs). Found in a complex with GRIA1, GRIA2, GRIA3, GRIA4, CNIH2, CNIH3, CACNG2, CACNG4, CACNG5, CACNG7 and CACNG8. Interacts with AP4M1 and GRIA1; associates GRIA1 with the adaptor protein complex 4 (AP-4) to target GRIA1 to the somatodendritic compartment of neurons.

Its subcellular location is the membrane. In terms of biological role, regulates the trafficking to the somatodendritic compartment and gating properties of AMPA-selective glutamate receptors (AMPARs). Promotes their targeting to the cell membrane and synapses and modulates their gating properties by slowing their rates of activation, deactivation and desensitization. Does not show subunit-specific AMPA receptor regulation and regulates all AMPAR subunits. Thought to stabilize the calcium channel in an inactivated (closed) state. This Homo sapiens (Human) protein is Voltage-dependent calcium channel gamma-3 subunit (CACNG3).